The chain runs to 281 residues: NADPH-dependent 7-cyano-7-deazaguanine reductase (281 aa).

A substrate-binding site is contributed by 87 to 89 (VES). 89-90 (SK) lines the NADPH pocket. The active-site Thioimide intermediate is Cys-188. Catalysis depends on Asp-195, which acts as the Proton donor. A substrate-binding site is contributed by 227 to 228 (HE). 256–257 (RG) serves as a coordination point for NADPH.

The protein belongs to the GTP cyclohydrolase I family. QueF type 2 subfamily. Homodimer.

The protein localises to the cytoplasm. It catalyses the reaction 7-aminomethyl-7-carbaguanine + 2 NADP(+) = 7-cyano-7-deazaguanine + 2 NADPH + 3 H(+). Its pathway is tRNA modification; tRNA-queuosine biosynthesis. Catalyzes the NADPH-dependent reduction of 7-cyano-7-deazaguanine (preQ0) to 7-aminomethyl-7-deazaguanine (preQ1). The chain is NADPH-dependent 7-cyano-7-deazaguanine reductase from Aliivibrio fischeri (strain ATCC 700601 / ES114) (Vibrio fischeri).